The sequence spans 442 residues: Chromosomal replication initiator protein DnaA (442 aa).

The domain I, interacts with DnaA modulators stretch occupies residues 1-75; the sequence is MDAWPRCLER…GNGEVALAVG (75 aa). The interval 75–104 is domain II; it reads GSRPRAPEPLPAPQAVASAPAAAPIVPFAG. The segment at 105-322 is domain III, AAA+ region; sequence NLDSHYTFAN…GALNTLVARA (218 aa). Glycine 150, glycine 152, lysine 153, and threonine 154 together coordinate ATP. A domain IV, binds dsDNA region spans residues 323–442; that stretch reads NFTGRSITVE…WEKLIRKLSE (120 aa).

This sequence belongs to the DnaA family. In terms of assembly, oligomerizes as a right-handed, spiral filament on DNA at oriC.

Its subcellular location is the cytoplasm. In terms of biological role, plays an essential role in the initiation and regulation of chromosomal replication. ATP-DnaA binds to the origin of replication (oriC) to initiate formation of the DNA replication initiation complex once per cell cycle. Binds the DnaA box (a 9 base pair repeat at the origin) and separates the double-stranded (ds)DNA. Forms a right-handed helical filament on oriC DNA; dsDNA binds to the exterior of the filament while single-stranded (ss)DNA is stabiized in the filament's interior. The ATP-DnaA-oriC complex binds and stabilizes one strand of the AT-rich DNA unwinding element (DUE), permitting loading of DNA polymerase. After initiation quickly degrades to an ADP-DnaA complex that is not apt for DNA replication. Binds acidic phospholipids. The polypeptide is Chromosomal replication initiator protein DnaA (Xanthomonas campestris pv. campestris (strain 8004)).